Consider the following 277-residue polypeptide: 5-formyltetrahydrofolate cyclo-ligase, mitochondrial (277 aa).

A mitochondrion-targeting transit peptide spans 1–48 (MIGARVFCITTTALRRSPIFFFPKIPTRPVFRLSPATRPIVAMSTTSK). Residue 60–64 (KRVVR) coordinates ATP. Substrate contacts are provided by residues Glu113 and 207 to 211 (RGGGY). ATP contacts are provided by residues 206–213 (GRGGGYYD) and Asp254.

It belongs to the 5-formyltetrahydrofolate cyclo-ligase family. As to quaternary structure, monomer.

It is found in the mitochondrion. It catalyses the reaction (6S)-5-formyl-5,6,7,8-tetrahydrofolate + ATP = (6R)-5,10-methenyltetrahydrofolate + ADP + phosphate. Its function is as follows. Contributes to tetrahydrofolate metabolism and photorespiration through the regulation of serine hydroxymethyltransferase. Prefers the pentalutamyl to the monoglutamyl form of 5-formyltetrahydrofolate. In Arabidopsis thaliana (Mouse-ear cress), this protein is 5-formyltetrahydrofolate cyclo-ligase, mitochondrial (5FCL).